Reading from the N-terminus, the 346-residue chain is Trans-enoyl reductase FFUJ_12240 (346 aa).

40 to 43 provides a ligand contact to NADP(+); it reads HDAK. 124-131 contacts substrate; sequence LAIATAGL. NADP(+)-binding positions include 157 to 160, 180 to 183, Tyr-198, and 245 to 246; these read ATAT, SPSN, and LE. Substrate is bound at residue 266-270; sequence APSIL. An NADP(+)-binding site is contributed by 335–336; the sequence is VH.

This sequence belongs to the zinc-containing alcohol dehydrogenase family.

Trans-enoyl reductase; part of the gene cluster that mediates the biosynthesis of fujikurins A-D, secondary metabolites playing a role during rice infection. The polyketide synthase PKS19 acts with the trans-enoyl reductase FFUJ_12240 and the polyketide transferase FFUJ_12241 to produce fujikurins, however, the biosynthesis pathway has not been identified yet. This Gibberella fujikuroi (strain CBS 195.34 / IMI 58289 / NRRL A-6831) (Bakanae and foot rot disease fungus) protein is Trans-enoyl reductase FFUJ_12240.